The sequence spans 185 residues: Translocon-associated protein subunit gamma (185 aa).

An N-acetylmethionine modification is found at Met1. Topologically, residues 1–27 are lumenal; the sequence is MAPKGGSKQQSEEDLLLQDFSRNLSAK. Phosphoserine occurs at positions 7 and 11. Residues 28–48 traverse the membrane as a helical segment; it reads SSALFFGNAFIVSAIPIWLYW. Over 49–54 the chain is Cytoplasmic; sequence RIWHMD. A helical transmembrane segment spans residues 55 to 76; that stretch reads LIQSAVLYSVMTLVSTYLVAFA. Residues 77-135 are Lumenal-facing; it reads YKNVKFVLKHKVAQKREDAVSKEVTRKLSEADNRKMSRKEKDERILWKKNEVADYEATT. A Phosphoserine modification is found at Ser105. Residues 136–157 traverse the membrane as a helical segment; that stretch reads FSIFYNNTLFLVLVIVASFFIL. Residues 158 to 163 lie on the Cytoplasmic side of the membrane; that stretch reads KNFNPT. A helical transmembrane segment spans residues 164–184; the sequence is VNYILSISASSGLIALLSTGS.

It belongs to the TRAP-gamma family. Heterotetramer of TRAP-alpha, TRAP-beta, TRAP-delta and TRAP-gamma.

The protein localises to the endoplasmic reticulum membrane. Its function is as follows. TRAP proteins are part of a complex whose function is to bind calcium to the ER membrane and thereby regulate the retention of ER resident proteins. The chain is Translocon-associated protein subunit gamma (Ssr3) from Mus musculus (Mouse).